Consider the following 428-residue polypeptide: Glutamate-1-semialdehyde 2,1-aminomutase 1 (428 aa).

At lysine 267 the chain carries N6-(pyridoxal phosphate)lysine.

This sequence belongs to the class-III pyridoxal-phosphate-dependent aminotransferase family. HemL subfamily. Homodimer. Pyridoxal 5'-phosphate is required as a cofactor.

The protein localises to the cytoplasm. The enzyme catalyses (S)-4-amino-5-oxopentanoate = 5-aminolevulinate. It participates in porphyrin-containing compound metabolism; protoporphyrin-IX biosynthesis; 5-aminolevulinate from L-glutamyl-tRNA(Glu): step 2/2. This is Glutamate-1-semialdehyde 2,1-aminomutase 1 from Staphylococcus aureus (strain MW2).